The sequence spans 391 residues: Phosphoglycerate kinase (391 aa).

Substrate is bound by residues 21 to 23 (DLN), Arg36, 59 to 62 (HLGR), Arg113, and Arg146. ATP-binding positions include Lys197, Glu319, and 345 to 348 (GGDT).

The protein belongs to the phosphoglycerate kinase family. In terms of assembly, monomer.

It localises to the cytoplasm. It catalyses the reaction (2R)-3-phosphoglycerate + ATP = (2R)-3-phospho-glyceroyl phosphate + ADP. Its pathway is carbohydrate degradation; glycolysis; pyruvate from D-glyceraldehyde 3-phosphate: step 2/5. The protein is Phosphoglycerate kinase of Shewanella baltica (strain OS155 / ATCC BAA-1091).